Consider the following 37-residue polypeptide: Kappa-actitoxin-Bgr1a (37 aa).

The 36-residue stretch at 2-37 (CRDWFKETACRHAKSLGNCRTSQKYRANCAKTCELC) folds into the ShKT domain. 3 cysteine pairs are disulfide-bonded: Cys-2/Cys-37, Cys-11/Cys-30, and Cys-20/Cys-34. The crucial for binding to potassium channels stretch occupies residues 25 to 26 (KY).

Belongs to the sea anemone type 1 potassium channel toxin family. Type 1b subfamily.

The protein resides in the secreted. The protein localises to the nematocyst. Inhibits voltage-dependent potassium channels of the Kv1 family (Kv1.1/KCNA1 (Kd=6 nM), Kv1.2/KCNA2 (Kd=15 nM), Kv1.3/KCNA3 (Kd=10-39 nM), Kv1.6/KCNA6, and KCa3.1/KCNN4 (Kd=172 nM)). The polypeptide is Kappa-actitoxin-Bgr1a (Bunodosoma granuliferum (Red warty sea anemone)).